The following is a 378-amino-acid chain: Alcohol dehydrogenase 1 (378 aa).

Zn(2+) is bound at residue cysteine 48. 49–53 (HTDVL) is an NAD(+) binding site. 6 residues coordinate Zn(2+): histidine 69, cysteine 99, cysteine 102, cysteine 105, cysteine 113, and cysteine 177. NAD(+) contacts are provided by residues 202 to 207 (GIGTVG), aspartate 226, lysine 231, 274 to 276 (TGV), 297 to 299 (IGA), and 321 to 323 (TTF).

It belongs to the zinc-containing alcohol dehydrogenase family. Class-IV subfamily. Homodimer. Zn(2+) is required as a cofactor. In terms of tissue distribution, expressed in flowers and disk florets.

It participates in isoprenoid biosynthesis. The polypeptide is Alcohol dehydrogenase 1 (Tanacetum cinerariifolium (Dalmatian daisy)).